Reading from the N-terminus, the 446-residue chain is BAG family molecular chaperone regulator 7 (446 aa).

The tract at residues Thr-230–Lys-252 is disordered. The span at Glu-239–Lys-250 shows a compositional bias: basic and acidic residues. Residues Pro-303–Ala-332 form the IQ domain. A BAG domain is found at Asp-330–Pro-407. A Phosphothreonine modification is found at Thr-443.

In terms of assembly, binds to the ATPase domain of HSP70/HSC70 chaperones. Interacts with HSP70-11/BIP2.

The protein localises to the endoplasmic reticulum. Its function is as follows. Co-chaperone that regulates diverse cellular pathways, such as programmed cell death and stress responses. Necessary for the proper maintenance of the unfolded protein response (UPR) during heat and cold tolerance. The polypeptide is BAG family molecular chaperone regulator 7 (BAG7) (Arabidopsis thaliana (Mouse-ear cress)).